We begin with the raw amino-acid sequence, 223 residues long: Octanoyltransferase (223 aa).

Positions 30–214 (DLDRDCFLLT…IVADLFGEFT (185 aa)) constitute a BPL/LPL catalytic domain. Residues 75-82 (RGGEITYH), 144-146 (SIG), and 157-159 (GFA) each bind substrate. Cys-175 functions as the Acyl-thioester intermediate in the catalytic mechanism.

It belongs to the LipB family.

It localises to the cytoplasm. It carries out the reaction octanoyl-[ACP] + L-lysyl-[protein] = N(6)-octanoyl-L-lysyl-[protein] + holo-[ACP] + H(+). Its pathway is protein modification; protein lipoylation via endogenous pathway; protein N(6)-(lipoyl)lysine from octanoyl-[acyl-carrier-protein]: step 1/2. In terms of biological role, catalyzes the transfer of endogenously produced octanoic acid from octanoyl-acyl-carrier-protein onto the lipoyl domains of lipoate-dependent enzymes. Lipoyl-ACP can also act as a substrate although octanoyl-ACP is likely to be the physiological substrate. This Desulfotalea psychrophila (strain LSv54 / DSM 12343) protein is Octanoyltransferase.